Consider the following 368-residue polypeptide: Glutamate 5-kinase (368 aa).

An ATP-binding site is contributed by K18. Substrate contacts are provided by S58, D145, and N157. ATP is bound by residues 177 to 178 and 218 to 224; these read SD and TGGMASK. A PUA domain is found at 280–358; the sequence is AGSLTLDEGA…SELPGELRRP (79 aa).

It belongs to the glutamate 5-kinase family.

The protein resides in the cytoplasm. It carries out the reaction L-glutamate + ATP = L-glutamyl 5-phosphate + ADP. The protein operates within amino-acid biosynthesis; L-proline biosynthesis; L-glutamate 5-semialdehyde from L-glutamate: step 1/2. Its function is as follows. Catalyzes the transfer of a phosphate group to glutamate to form L-glutamate 5-phosphate. The chain is Glutamate 5-kinase from Mycobacterium ulcerans (strain Agy99).